The chain runs to 310 residues: UDP-N-acetylenolpyruvoylglucosamine reductase (310 aa).

Residues 34-213 (RAGGNAEVLF…LRRMNEITSS (180 aa)) form the FAD-binding PCMH-type domain. Arg178 is an active-site residue. Ser227 serves as the catalytic Proton donor. Residue Glu297 is part of the active site.

Belongs to the MurB family. It depends on FAD as a cofactor.

Its subcellular location is the cytoplasm. The catalysed reaction is UDP-N-acetyl-alpha-D-muramate + NADP(+) = UDP-N-acetyl-3-O-(1-carboxyvinyl)-alpha-D-glucosamine + NADPH + H(+). Its pathway is cell wall biogenesis; peptidoglycan biosynthesis. Cell wall formation. This Parvibaculum lavamentivorans (strain DS-1 / DSM 13023 / NCIMB 13966) protein is UDP-N-acetylenolpyruvoylglucosamine reductase.